The chain runs to 50 residues: F420-non-reducing hydrogenase vhu subunit U (50 aa).

Residues Sec-27 and Cys-30 each contribute to the Ni(2+) site. Position 27 (Sec-27) is a non-standard amino acid, selenocysteine. A propeptide spans 34 to 50 (IIVKDEKGNKIIEVIKE) (removed in mature form).

It belongs to the [NiFe]/[NiFeSe] hydrogenase large subunit family. In terms of assembly, the F420-non-reducing hydrogenase vhu is composed of four subunits; VhuA, VhuD, VhuG and VhuU. The cofactor is Ni(2+).

This chain is F420-non-reducing hydrogenase vhu subunit U (vhuU), found in Methanocaldococcus jannaschii (strain ATCC 43067 / DSM 2661 / JAL-1 / JCM 10045 / NBRC 100440) (Methanococcus jannaschii).